We begin with the raw amino-acid sequence, 360 residues long: D-alanine--D-alanine ligase (360 aa).

Residues Lys-149–Gln-353 form the ATP-grasp domain. Lys-176 to Glu-231 is an ATP binding site. Mg(2+) contacts are provided by Asp-308, Glu-320, and Asn-322.

Belongs to the D-alanine--D-alanine ligase family. Mg(2+) serves as cofactor. Requires Mn(2+) as cofactor.

It localises to the cytoplasm. It carries out the reaction 2 D-alanine + ATP = D-alanyl-D-alanine + ADP + phosphate + H(+). It participates in cell wall biogenesis; peptidoglycan biosynthesis. Cell wall formation. In Corynebacterium glutamicum (strain ATCC 13032 / DSM 20300 / JCM 1318 / BCRC 11384 / CCUG 27702 / LMG 3730 / NBRC 12168 / NCIMB 10025 / NRRL B-2784 / 534), this protein is D-alanine--D-alanine ligase.